The following is a 225-amino-acid chain: MGIKDWPQGEGPREKLLLDGAEQLSDAELLAVLLRVGLKGLSAVELARMMITEFGGLRSLLTASQAQVCRLDGIGPVKFAQLQAAVEIGKRISKENLKRGKILSDPDLTRDYLMRQLGDRAYEVFAILLLDSQHRVIQFVELFRGTINSASVYPRDVVGLVLEKKAAAVIVCHNHPSGIAEPSTADRRITERLKQALQTIDVSLLDHMVVGDREIVSFAERGWID.

Residues 102–224 (ILSDPDLTRD…IVSFAERGWI (123 aa)) form the MPN domain. Zn(2+) is bound by residues His173, His175, and Asp186. Residues 173–186 (HNHPSGIAEPSTAD) carry the JAMM motif motif.

It belongs to the UPF0758 family.

The protein is UPF0758 protein swp_2203 of Shewanella piezotolerans (strain WP3 / JCM 13877).